A 629-amino-acid polypeptide reads, in one-letter code: 1-deoxy-D-xylulose-5-phosphate synthase (629 aa).

Residues H72 and 113-115 (GHA) contribute to the thiamine diphosphate site. D144 lines the Mg(2+) pocket. Thiamine diphosphate-binding positions include 145-146 (GA), N174, Y287, and E370. Residue N174 participates in Mg(2+) binding.

This sequence belongs to the transketolase family. DXPS subfamily. Homodimer. It depends on Mg(2+) as a cofactor. Thiamine diphosphate is required as a cofactor.

It carries out the reaction D-glyceraldehyde 3-phosphate + pyruvate + H(+) = 1-deoxy-D-xylulose 5-phosphate + CO2. Its pathway is metabolic intermediate biosynthesis; 1-deoxy-D-xylulose 5-phosphate biosynthesis; 1-deoxy-D-xylulose 5-phosphate from D-glyceraldehyde 3-phosphate and pyruvate: step 1/1. In terms of biological role, catalyzes the acyloin condensation reaction between C atoms 2 and 3 of pyruvate and glyceraldehyde 3-phosphate to yield 1-deoxy-D-xylulose-5-phosphate (DXP). This is 1-deoxy-D-xylulose-5-phosphate synthase from Prochlorococcus marinus (strain MIT 9215).